Consider the following 154-residue polypeptide: Interleukin-2 (154 aa).

Residues 1 to 20 form the signal peptide; sequence MYRMQLLSCIALSLALVTNS. An O-linked (GalNAc...) threonine glycan is attached at threonine 23. A disulfide bridge connects residues cysteine 78 and cysteine 126.

This sequence belongs to the IL-2 family.

Its subcellular location is the secreted. Cytokine produced by activated CD4-positive helper T-cells and to a lesser extend activated CD8-positive T-cells and natural killer (NK) cells that plays pivotal roles in the immune response and tolerance. Binds to a receptor complex composed of either the high-affinity trimeric IL-2R (IL2RA/CD25, IL2RB/CD122 and IL2RG/CD132) or the low-affinity dimeric IL-2R (IL2RB and IL2RG). Interaction with the receptor leads to oligomerization and conformation changes in the IL-2R subunits resulting in downstream signaling starting with phosphorylation of JAK1 and JAK3. In turn, JAK1 and JAK3 phosphorylate the receptor to form a docking site leading to the phosphorylation of several substrates including STAT5. This process leads to activation of several pathways including STAT, phosphoinositide-3-kinase/PI3K and mitogen-activated protein kinase/MAPK pathways. Functions as a T-cell growth factor and can increase NK-cell cytolytic activity as well. Promotes strong proliferation of activated B-cells and subsequently immunoglobulin production. Plays a pivotal role in regulating the adaptive immune system by controlling the survival and proliferation of regulatory T-cells, which are required for the maintenance of immune tolerance. Moreover, participates in the differentiation and homeostasis of effector T-cell subsets, including Th1, Th2, Th17 as well as memory CD8-positive T-cells. This is Interleukin-2 (IL2) from Papio anubis (Olive baboon).